The chain runs to 211 residues: Pyridoxine/pyridoxamine 5'-phosphate oxidase (211 aa).

Substrate is bound by residues 7–10 (RREY) and K65. FMN contacts are provided by residues 60-65 (RIVLLK), 75-76 (YT), R81, K82, and Q104. Y122, R126, and S130 together coordinate substrate. FMN is bound by residues 139 to 140 (QS) and W184. 190-192 (RLH) is a binding site for substrate. R194 provides a ligand contact to FMN.

The protein belongs to the pyridoxamine 5'-phosphate oxidase family. In terms of assembly, homodimer. FMN is required as a cofactor.

The catalysed reaction is pyridoxamine 5'-phosphate + O2 + H2O = pyridoxal 5'-phosphate + H2O2 + NH4(+). It catalyses the reaction pyridoxine 5'-phosphate + O2 = pyridoxal 5'-phosphate + H2O2. It participates in cofactor metabolism; pyridoxal 5'-phosphate salvage; pyridoxal 5'-phosphate from pyridoxamine 5'-phosphate: step 1/1. The protein operates within cofactor metabolism; pyridoxal 5'-phosphate salvage; pyridoxal 5'-phosphate from pyridoxine 5'-phosphate: step 1/1. In terms of biological role, catalyzes the oxidation of either pyridoxine 5'-phosphate (PNP) or pyridoxamine 5'-phosphate (PMP) into pyridoxal 5'-phosphate (PLP). The protein is Pyridoxine/pyridoxamine 5'-phosphate oxidase of Vibrio campbellii (strain ATCC BAA-1116).